A 232-amino-acid chain; its full sequence is MKAGIIGAMEQEVTLLRDKIENRQTLTLAGCEIYTGTLNGVDVALLKSGIGKVSAALGTTLLLELCKPDVVINTGSAGGLAATLKVGDIVVSDEVRYHDADVTAFGYEAGQMAGCPAAFKADEKLITAVEQCIHQLDLHAVRGLVVSGDAFINGAAPLAHIRNTFPQAIAVEMEATAIGHVCHQFGTPFVVVRAISDVADQQSHLSFDEFLAVAAKQSSLLVEKLLAHLAQG.

Residue E12 is the Proton acceptor of the active site. Residues G78, I152, and 173–174 contribute to the substrate site; that span reads ME. The active-site Proton donor is the D197.

The protein belongs to the PNP/UDP phosphorylase family. MtnN subfamily. As to quaternary structure, homodimer.

It catalyses the reaction S-adenosyl-L-homocysteine + H2O = S-(5-deoxy-D-ribos-5-yl)-L-homocysteine + adenine. It carries out the reaction S-methyl-5'-thioadenosine + H2O = 5-(methylsulfanyl)-D-ribose + adenine. The enzyme catalyses 5'-deoxyadenosine + H2O = 5-deoxy-D-ribose + adenine. The protein operates within amino-acid biosynthesis; L-methionine biosynthesis via salvage pathway; S-methyl-5-thio-alpha-D-ribose 1-phosphate from S-methyl-5'-thioadenosine (hydrolase route): step 1/2. In terms of biological role, catalyzes the irreversible cleavage of the glycosidic bond in both 5'-methylthioadenosine (MTA) and S-adenosylhomocysteine (SAH/AdoHcy) to adenine and the corresponding thioribose, 5'-methylthioribose and S-ribosylhomocysteine, respectively. Also cleaves 5'-deoxyadenosine, a toxic by-product of radical S-adenosylmethionine (SAM) enzymes, into 5-deoxyribose and adenine. Thus, is required for in vivo function of the radical SAM enzymes biotin synthase and lipoic acid synthase, that are inhibited by 5'-deoxyadenosine accumulation. The protein is 5'-methylthioadenosine/S-adenosylhomocysteine nucleosidase of Erwinia tasmaniensis (strain DSM 17950 / CFBP 7177 / CIP 109463 / NCPPB 4357 / Et1/99).